A 676-amino-acid chain; its full sequence is Maternal embryonic leucine zipper kinase (676 aa).

Positions 13–265 (YEVYETIGSG…VKHLLDHPWV (253 aa)) constitute a Protein kinase domain. Residues 19–27 (IGSGGFAKV) and K42 each bind ATP. The Proton acceptor role is filled by D134. T169 bears the Phosphothreonine; by autocatalysis mark. The residue at position 173 (S173) is a Phosphoserine; by autocatalysis. The segment at 284 to 323 (IDEDCITEMAVTFKQSKQRTIQLVSEWKYDQITATYLLLL) is UBA-like. The interval 328–673 (QGRPVRLRAE…VEDILSSSSQ (346 aa)) is autoinhibitory region. The segment covering 423 to 443 (EHSRPCRQKPERRERTKENKE) has biased composition (basic and acidic residues). A disordered region spans residues 423 to 518 (EHSRPCRQKP…QQNGQQGELN (96 aa)). Polar residues predominate over residues 462–489 (TPTSSRKVKSNRTVMTTPNHNNNKSSEV). A compositionally biased stretch (low complexity) spans 508 to 518 (QQQNGQQGELN). The KA1 domain occupies 624 to 673 (SDFGKVTMQFELEVCLLQKPEVVGIRRQRLKGDAWVYKHLVEDILSSSSQ).

Belongs to the protein kinase superfamily. CAMK Ser/Thr protein kinase family. SNF1 subfamily. Autophosphorylated: autophosphorylation of the T-loop at Thr-169 and Ser-173 is required for activation. In terms of tissue distribution, strongly expressed in the eye, gill, kidney, spleen, muscle, ovary and testis and weakly in the heart, liver, and gut. Expressed in the brain and lateral mesoderm at 12 hours post-fertilization (hpf).

The protein localises to the cell membrane. The enzyme catalyses L-seryl-[protein] + ATP = O-phospho-L-seryl-[protein] + ADP + H(+). The catalysed reaction is L-threonyl-[protein] + ATP = O-phospho-L-threonyl-[protein] + ADP + H(+). With respect to regulation, activated by autophosphorylation of the T-loop at Thr-169 and Ser-173: in contrast to other members of the SNF1 subfamily, phosphorylation at Thr-169 is not mediated by STK11/LKB1 but via autophosphorylation instead. In terms of biological role, serine/threonine-protein kinase involved in various processes such as cell cycle regulation, self-renewal of stem cells, apoptosis and splicing regulation. Also plays a role in primitive hematopoiesis, possibly by affecting the expression of genes critical for hematopoiesis. The chain is Maternal embryonic leucine zipper kinase (melk) from Danio rerio (Zebrafish).